Here is a 101-residue protein sequence, read N- to C-terminus: Putative defensin-like protein 307 (101 aa).

A signal peptide spans 1–22 (MEKSALIFIGILLFSTCTSIMA). 3 disulfides stabilise this stretch: C29/C49, C35/C54, and C40/C56.

Belongs to the DEFL family.

Its subcellular location is the secreted. This chain is Putative defensin-like protein 307, found in Arabidopsis thaliana (Mouse-ear cress).